We begin with the raw amino-acid sequence, 85 residues long: UPF0386 protein Plav_1374 (85 aa).

This sequence belongs to the UPF0386 family.

This chain is UPF0386 protein Plav_1374, found in Parvibaculum lavamentivorans (strain DS-1 / DSM 13023 / NCIMB 13966).